A 276-amino-acid chain; its full sequence is 4-hydroxy-tetrahydrodipicolinate reductase (276 aa).

Residues 10–15 (GALGKM), aspartate 36, and 109–111 (GTT) each bind NAD(+). Histidine 165 serves as the catalytic Proton donor/acceptor. Histidine 166 serves as a coordination point for (S)-2,3,4,5-tetrahydrodipicolinate. Lysine 169 (proton donor) is an active-site residue. (S)-2,3,4,5-tetrahydrodipicolinate is bound at residue 175 to 176 (GT).

It belongs to the DapB family.

The protein resides in the cytoplasm. The catalysed reaction is (S)-2,3,4,5-tetrahydrodipicolinate + NAD(+) + H2O = (2S,4S)-4-hydroxy-2,3,4,5-tetrahydrodipicolinate + NADH + H(+). The enzyme catalyses (S)-2,3,4,5-tetrahydrodipicolinate + NADP(+) + H2O = (2S,4S)-4-hydroxy-2,3,4,5-tetrahydrodipicolinate + NADPH + H(+). It participates in amino-acid biosynthesis; L-lysine biosynthesis via DAP pathway; (S)-tetrahydrodipicolinate from L-aspartate: step 4/4. Its function is as follows. Catalyzes the conversion of 4-hydroxy-tetrahydrodipicolinate (HTPA) to tetrahydrodipicolinate. The polypeptide is 4-hydroxy-tetrahydrodipicolinate reductase (Prochlorococcus marinus (strain SARG / CCMP1375 / SS120)).